Here is a 417-residue protein sequence, read N- to C-terminus: Calreticulin (417 aa).

Positions 1 to 17 are cleaved as a signal peptide; sequence MLLSVPLLLGLLGLAAA. The interval 18-197 is N-domain; sequence EPAVYFKEQF…NSQVESGSLE (180 aa). Gln-26 lines the Ca(2+) pocket. The residue at position 48 (Lys-48) is an N6-acetyllysine. Residues Lys-62 and Lys-64 each coordinate Ca(2+). An N6-(2-hydroxyisobutyryl)lysine modification is found at Lys-64. Cys-105 and Cys-137 are oxidised to a cystine. The an alpha-D-glucoside site is built by Tyr-109, Lys-111, Tyr-128, and Asp-135. An N6-acetyllysine modification is found at Lys-159. The stretch at 191–202 is one 1-1 repeat; sequence VESGSLEDDWDF. The interval 191–255 is 4 X approximate repeats; it reads VESGSLEDDW…DAKKPEDWDE (65 aa). A disordered region spans residues 193–277; the sequence is SGSLEDDWDF…NPEYKGEWKP (85 aa). The tract at residues 198 to 308 is P-domain; that stretch reads DDWDFLPPKK…YSPDANIYAY (111 aa). The segment covering 207 to 251 has biased composition (basic and acidic residues); the sequence is KIKDPDAAKPEDWDERAKIDDPTDSKPEDWDKPEHIPDPDAKKPE. Position 209 is an N6-acetyllysine (Lys-209). 6 tandem repeats follow at residues 210 to 221, 227 to 238, 244 to 255, 259 to 269, 273 to 283, and 287 to 297. Positions 237–270 are interaction with PPIB; it reads DKPEHIPDPDAKKPEDWDEEMDGEWEPPVIQNPE. Positions 252–261 are enriched in acidic residues; that stretch reads DWDEEMDGEW. Residues 259-297 are 3 X approximate repeats; the sequence is GEWEPPVIQNPEYKGEWKPRQIDNPDYKGTWIHPEIDNP. The tract at residues 309–417 is C-domain; sequence DSFAVLGLDL…TTPGQTKDEL (109 aa). An an alpha-D-glucoside-binding site is contributed by Asp-317. Residue Asp-328 coordinates Ca(2+). Residues 350 to 417 are disordered; that stretch reads TKASEKQMKD…TTPGQTKDEL (68 aa). A compositionally biased stretch (basic and acidic residues) spans 352 to 379; sequence ASEKQMKDKQDEEQRLKEEEEDKKRKEE. Positions 380-408 are enriched in acidic residues; sequence EEAEDKEDEDDRDEDEEDEDEKEEDEEDT. A Prevents secretion from ER motif is present at residues 414–417; it reads KDEL.

Belongs to the calreticulin family. Monomer. Component of an EIF2 complex at least composed of CELF1/CUGBP1, CALR, CALR3, EIF2S1, EIF2S2, HSP90B1 and HSPA5. Interacts with PDIA3/ERp57 and SPACA9. Interacts with TRIM21. Interacts with NR3C1. Interacts with PPIB. Interacts (via P-domain) with PDIA5. Interacts with GABARAP. Interacts with CLCC1.

Its subcellular location is the endoplasmic reticulum lumen. It is found in the cytoplasm. It localises to the cytosol. The protein localises to the cytolytic granule. The protein resides in the secreted. Its subcellular location is the extracellular space. It is found in the extracellular matrix. It localises to the cell surface. The protein localises to the sarcoplasmic reticulum lumen. The protein resides in the cytoplasmic vesicle. Its subcellular location is the secretory vesicle. It is found in the cortical granule. In terms of biological role, calcium-binding chaperone that promotes folding, oligomeric assembly and quality control in the endoplasmic reticulum (ER) via the calreticulin/calnexin cycle. This lectin interacts transiently with almost all of the monoglucosylated glycoproteins that are synthesized in the ER. Interacts with the DNA-binding domain of NR3C1 and mediates its nuclear export. Involved in maternal gene expression regulation. May participate in oocyte maturation via the regulation of calcium homeostasis. Present in the cortical granules of non-activated oocytes, is exocytosed during the cortical reaction in response to oocyte activation and might participate in the block to polyspermy. In Cricetulus griseus (Chinese hamster), this protein is Calreticulin (CALR).